We begin with the raw amino-acid sequence, 459 residues long: Probable ECA polymerase (459 aa).

The next 11 membrane-spanning stretches (helical) occupy residues 3–23, 37–57, 65–85, 119–139, 154–174, 181–201, 206–226, 227–247, 340–360, 377–397, and 409–429; these read LTQFGGLFVVYLISLVFILTL, IFFSLLYLLTFYFGFPLTCLL, VVPVDALLHALLASTCFYGIY, LASVAVVTVGLFFMQNGFLLF, GVALKRFFYFFIPAMLVVYFL, WLFFLISTVAFGILTYVVVGG, IIIAFALFLFIGIVRGWITLW, MLVTAGAIGIVGMFWLALKRY, LVVMGGVLFIPVGAIVVGLII, YKAAILQAFCFGAIFNMIVLA, and VFFCIIFGLCLVIAKLLYWLF.

Belongs to the WzyE family. Probably part of a complex composed of WzxE, WzyE and WzzE.

Its subcellular location is the cell inner membrane. It functions in the pathway bacterial outer membrane biogenesis; enterobacterial common antigen biosynthesis. Its function is as follows. Probably involved in the polymerization of enterobacterial common antigen (ECA) trisaccharide repeat units. In Photorhabdus laumondii subsp. laumondii (strain DSM 15139 / CIP 105565 / TT01) (Photorhabdus luminescens subsp. laumondii), this protein is Probable ECA polymerase.